The sequence spans 460 residues: Glutamyl-tRNA reductase (460 aa).

Substrate is bound by residues 48–51 (TCNR), serine 100, 105–107 (EDQ), and glutamine 111. Cysteine 49 (nucleophile) is an active-site residue. 180-185 (GAGEIG) contributes to the NADP(+) binding site.

Belongs to the glutamyl-tRNA reductase family. As to quaternary structure, homodimer.

The catalysed reaction is (S)-4-amino-5-oxopentanoate + tRNA(Glu) + NADP(+) = L-glutamyl-tRNA(Glu) + NADPH + H(+). It participates in porphyrin-containing compound metabolism; protoporphyrin-IX biosynthesis; 5-aminolevulinate from L-glutamyl-tRNA(Glu): step 1/2. Functionally, catalyzes the NADPH-dependent reduction of glutamyl-tRNA(Glu) to glutamate 1-semialdehyde (GSA). This chain is Glutamyl-tRNA reductase, found in Methanosarcina acetivorans (strain ATCC 35395 / DSM 2834 / JCM 12185 / C2A).